The primary structure comprises 327 residues: Malate dehydrogenase (327 aa).

Glycine 12–cysteine 18 serves as a coordination point for NAD(+). Arginine 92 and arginine 98 together coordinate substrate. Residues asparagine 105, glutamine 112, and threonine 129 to asparagine 131 each bind NAD(+). Substrate contacts are provided by asparagine 131 and arginine 162. Catalysis depends on histidine 187, which acts as the Proton acceptor.

It belongs to the LDH/MDH superfamily. MDH type 2 family.

It catalyses the reaction (S)-malate + NAD(+) = oxaloacetate + NADH + H(+). In terms of biological role, catalyzes the reversible oxidation of malate to oxaloacetate. The protein is Malate dehydrogenase of Cutibacterium acnes (strain DSM 16379 / KPA171202) (Propionibacterium acnes).